Here is a 274-residue protein sequence, read N- to C-terminus: Large ribosomal subunit protein uL2cz (274 aa).

2 disordered regions span residues 1–25 and 224–274; these read MAIHLYKTSTPSTRNGTVDSQVKSN and NPVD…RRSK. Residues 7–25 are compositionally biased toward polar residues; the sequence is KTSTPSTRNGTVDSQVKSN.

The protein belongs to the universal ribosomal protein uL2 family. In terms of assembly, part of the 50S ribosomal subunit.

It is found in the plastid. Its subcellular location is the chloroplast. The polypeptide is Large ribosomal subunit protein uL2cz (rpl2-A) (Atropa belladonna (Belladonna)).